Consider the following 723-residue polypeptide: Beta-xylosidase (723 aa).

A signal peptide spans 1–19 (MKKLWLMGLLLASFFTTVA).

It belongs to the glycosyl hydrolase 3 family.

The protein resides in the periplasm. Functionally, xylosidase involved in ulvan degradation. Ulvan is the main polysaccharide component of the Ulvales (green seaweed) cell wall. It is composed of disaccharide building blocks comprising 3-sulfated rhamnose (Rha3S) linked to D-glucuronic acid (GlcA), L-iduronic acid (IduA), or D-xylose (Xyl). Beta-xylosidase converts Xyl-Rha3S, a product of alpha-L-rhamnosidase acting on Rha-Xyl-Rha3S oligosaccharides, further to Xyl and Rha3S. The enzyme is able to degrade 4-methylumbelliferyl-beta-D-xylopyranoside (MUX) in vitro. In Formosa agariphila (strain DSM 15362 / KCTC 12365 / LMG 23005 / KMM 3901 / M-2Alg 35-1), this protein is Beta-xylosidase.